Here is a 135-residue protein sequence, read N- to C-terminus: UPF0299 membrane protein YE2790 (135 aa).

4 consecutive transmembrane segments (helical) span residues 4–24 (VTSL…CLWA), 30–50 (LLLP…FALL), 63–83 (GCHL…VGVM), and 93–113 (FGPI…VVGY).

Belongs to the UPF0299 family.

The protein localises to the cell inner membrane. In Yersinia enterocolitica serotype O:8 / biotype 1B (strain NCTC 13174 / 8081), this protein is UPF0299 membrane protein YE2790.